Reading from the N-terminus, the 673-residue chain is NACHT, LRR and PYD domains-containing protein 10 (673 aa).

One can recognise a Pyrin domain in the interval 1 to 92; it reads MALARANSPQ…VDYLNQVCLN (92 aa). The NACHT domain occupies 163 to 469; that stretch reads PIVVMQGSAG…AMSFLVKEDQ (307 aa). Position 169-176 (169-176) interacts with ATP; the sequence is GSAGTGKT. The tract at residues 578–673 is disordered; sequence SDKKKSVSVT…DGEMIDKMNG (96 aa). The span at 584–597 shows a compositional bias: low complexity; that stretch reads VSVTSSFSSGKVQS. Over residues 633–648 the composition is skewed to basic and acidic residues; it reads ASREKGHMEMNDKEDG. Residues 649–658 are compositionally biased toward acidic residues; the sequence is GVEEQEDEEG. Residues 659 to 673 show a composition bias toward basic and acidic residues; the sequence is QTLKKDGEMIDKMNG.

The protein belongs to the NLRP family. As to quaternary structure, oligomerizes. Interacts with PYCARD. Also interacts with CASP1 and IL1B. Interacts with NOD1 and components of the NOD1 signaling pathway including RIPK2, NR2C2/TAK1 and IKBKG/NEMO. In terms of tissue distribution, expressed in skin, tongue, heart, colon and several cell lines of hematopoietic and myocytic origin but not in kidney, skeletal muscle, spleen, liver, lung, thymus, brain or small intestine (at protein level).

It is found in the cytoplasm. Its subcellular location is the cell membrane. In terms of biological role, inhibits autoprocessing of CASP1, CASP1-dependent IL1B secretion, PYCARD aggregation and PYCARD-mediated apoptosis but not apoptosis induced by FAS or BID. Displays anti-inflammatory activity. Required for immunity against C.albicans infection. Involved in the innate immune response by contributing to pro-inflammatory cytokine release in response to invasive bacterial infection. Contributes to T-cell-mediated inflammatory responses in the skin. Plays a role in protection against periodontitis through its involvement in induction of IL1A via ERK activation in oral epithelial cells infected with periodontal pathogens. Exhibits both ATPase and GTPase activities. This chain is NACHT, LRR and PYD domains-containing protein 10 (Nlrp10), found in Mus musculus (Mouse).